The chain runs to 244 residues: Mannose-binding protein C (244 aa).

Residues 1–18 (MSIFTSFLLLCVVTVVYA) form the signal peptide. The Collagen-like domain maps to 38-96 (GLNGFPGKDGRDGAKGEKGEPGQGLRGLQGPPGKVGPTGPPGNPGLKGAVGPKGDRGDR). Residues 40-101 (NGFPGKDGRD…DRGDRAEFDT (62 aa)) are disordered. P43 carries the post-translational modification 4-hydroxyproline. The segment covering 45–57 (KDGRDGAKGEKGE) has biased composition (basic and acidic residues). Residues P58, P69, P78, and P81 each carry the 4-hydroxyproline modification. A compositionally biased stretch (low complexity) spans 65–74 (LQGPPGKVGP). The segment covering 90 to 99 (KGDRGDRAEF) has biased composition (basic and acidic residues). Residues 108–126 (IAALRSELRALRNWVLFSL) are a coiled coil. The region spanning 129–241 (KVGKKYFVSS…CSDSFLAICE (113 aa)) is the C-type lectin domain. 2 cysteine pairs are disulfide-bonded: C151–C240 and C218–C232. An N-linked (GlcNAc...) asparagine glycan is attached at N210.

Oligomeric complex of 3 or more homotrimers. Interacts with MASP1 and MASP2. Interacts with MEP1A and MEP1B and may inhibit their catalytic activity. Hydroxylation on proline residues within the sequence motif, GXPG, is most likely to be 4-hydroxy as this fits the requirement for 4-hydroxylation in vertebrates.

It is found in the secreted. Functionally, calcium-dependent lectin involved in innate immune defense. Binds mannose, fucose and N-acetylglucosamine on different microorganisms and activates the lectin complement pathway. Binds to late apoptotic cells, as well as to apoptotic blebs and to necrotic cells, but not to early apoptotic cells, facilitating their uptake by macrophages. In Mus musculus (Mouse), this protein is Mannose-binding protein C (Mbl2).